The primary structure comprises 809 residues: Leucine--tRNA ligase (809 aa).

The 'HIGH' region motif lies at Pro40–His51. A 'KMSKS' region motif is present at residues Lys581 to Ser585. Residue Lys584 coordinates ATP.

It belongs to the class-I aminoacyl-tRNA synthetase family.

The protein resides in the cytoplasm. It carries out the reaction tRNA(Leu) + L-leucine + ATP = L-leucyl-tRNA(Leu) + AMP + diphosphate. The protein is Leucine--tRNA ligase of Levilactobacillus brevis (strain ATCC 367 / BCRC 12310 / CIP 105137 / JCM 1170 / LMG 11437 / NCIMB 947 / NCTC 947) (Lactobacillus brevis).